The chain runs to 63 residues: Small ribosomal subunit protein eS17 (63 aa).

It belongs to the eukaryotic ribosomal protein eS17 family.

The protein is Small ribosomal subunit protein eS17 of Methanococcus maripaludis (strain C7 / ATCC BAA-1331).